We begin with the raw amino-acid sequence, 121 residues long: Small ribosomal subunit protein uS13 (121 aa).

The interval 92–121 (HRMGLPCRGQKTKTNARTRKGPRRGAARRK) is disordered. A compositionally biased stretch (basic residues) spans 101 to 121 (QKTKTNARTRKGPRRGAARRK).

It belongs to the universal ribosomal protein uS13 family. As to quaternary structure, part of the 30S ribosomal subunit. Forms a loose heterodimer with protein S19. Forms two bridges to the 50S subunit in the 70S ribosome.

In terms of biological role, located at the top of the head of the 30S subunit, it contacts several helices of the 16S rRNA. In the 70S ribosome it contacts the 23S rRNA (bridge B1a) and protein L5 of the 50S subunit (bridge B1b), connecting the 2 subunits; these bridges are implicated in subunit movement. Contacts the tRNAs in the A and P-sites. This is Small ribosomal subunit protein uS13 from Desulfotalea psychrophila (strain LSv54 / DSM 12343).